Consider the following 260-residue polypeptide: MIIVLSPAKSLDYDTPAHVPSYTKPAFVDDASELIDGLRKLSPQDIATLMDISDPLARLNFQRYADWSPTFSPANAKQAVLAFNGDVYEGFDAKSLSAADLDYAQQHVRVLSGLYGLLRPLDLLQPYRLEMGTRFANARGKDLYAFWGDRITRALNEQLETRSGVARVLVNCASTEYFKSVKPKLLAAPVVTPVFEDWKGGRYKIISFHAKRARGLMARYIVENRIAEPAALKDFALEDYAFDAAASNDSTYVYRRRIGE.

The protein belongs to the UPF0246 family.

The protein is UPF0246 protein Bamb_2261 of Burkholderia ambifaria (strain ATCC BAA-244 / DSM 16087 / CCUG 44356 / LMG 19182 / AMMD) (Burkholderia cepacia (strain AMMD)).